We begin with the raw amino-acid sequence, 305 residues long: UDP-3-O-acyl-N-acetylglucosamine deacetylase (305 aa).

Zn(2+) contacts are provided by His-78, His-237, and Asp-241. The active-site Proton donor is the His-264.

Belongs to the LpxC family. Requires Zn(2+) as cofactor.

It catalyses the reaction a UDP-3-O-[(3R)-3-hydroxyacyl]-N-acetyl-alpha-D-glucosamine + H2O = a UDP-3-O-[(3R)-3-hydroxyacyl]-alpha-D-glucosamine + acetate. Its pathway is glycolipid biosynthesis; lipid IV(A) biosynthesis; lipid IV(A) from (3R)-3-hydroxytetradecanoyl-[acyl-carrier-protein] and UDP-N-acetyl-alpha-D-glucosamine: step 2/6. Catalyzes the hydrolysis of UDP-3-O-myristoyl-N-acetylglucosamine to form UDP-3-O-myristoylglucosamine and acetate, the committed step in lipid A biosynthesis. The protein is UDP-3-O-acyl-N-acetylglucosamine deacetylase of Burkholderia thailandensis (strain ATCC 700388 / DSM 13276 / CCUG 48851 / CIP 106301 / E264).